The primary structure comprises 1067 residues: Dorsal-ventral patterning protein tolloid (1067 aa).

A signal peptide spans 1–36 (MKGMRLMPMKMKAKLVVLSVGALWMMMFFLVDYAEG). Positions 37 to 136 (RRLSQLPESE…NGQPIQRRRR (100 aa)) are excised as a propeptide. Residues 136–338 (RAVTVRKERT…VQANLLYKCA (203 aa)) form the Peptidase M12A domain. Residue Asn176 is glycosylated (N-linked (GlcNAc...) asparagine). Intrachain disulfides connect Cys179–Cys337, Cys201–Cys223, Cys203–Cys204, Cys340–Cys390, and Cys417–Cys439. His231 is a Zn(2+) binding site. Residue Glu232 is part of the active site. The Zn(2+) site is built by His235 and His241. Short sequence motifs (cell attachment site) lie at residues 245–247 (RGD) and 325–327 (RGD). CUB domains are found at residues 340 to 477 (CGRT…FEVV) and 478 to 591 (CGGD…LMLD). The N-linked (GlcNAc...) asparagine glycan is linked to Asn441. 6 disulfide bridges follow: Cys478–Cys505, Cys532–Cys554, Cys595–Cys606, Cys602–Cys615, Cys617–Cys630, and Cys634–Cys662. A glycan (N-linked (GlcNAc...) asparagine) is linked at Asn543. Residues 591–631 (DVDECKFTDHGCQHLCINTLGSYQCGCRAGYELQANGKTCE) form the EGF-like 1; calcium-binding domain. The CUB 3 domain occupies 634-753 (CGGVVDATKS…SGFVAKFVID (120 aa)). N-linked (GlcNAc...) asparagine glycans are attached at residues Asn644 and Asn677. Disulfide bonds link Cys693–Cys716, Cys757–Cys768, Cys764–Cys777, Cys779–Cys792, Cys797–Cys823, Cys850–Cys872, Cys910–Cys940, and Cys967–Cys989. Residues 753 to 793 (DVDECSMNNGGCQHRCRNTFGSYQCSCRNGYTLAENGHNCT) form the EGF-like 2; calcium-binding domain. N-linked (GlcNAc...) asparagine glycosylation is present at Asn791. CUB domains lie at 797–909 (CKFE…FVSE) and 910–1026 (CGGY…FMAV). N-linked (GlcNAc...) asparagine glycosylation is found at Asn864 and Asn918.

The cofactor is Zn(2+).

In terms of biological role, metalloprotease which cleaves TGF-beta family ligands daw, Actbeta and myo in vitro. Cleavage of daw enhances its signaling activity. Cleaves dorsal-ventral patterning protein sog. Processes sog more efficiently than metalloprotease tld which also cleaves sog. Required for normal dorsal development. TLD may interact physically with DPP-C protein. The sequence is that of Dorsal-ventral patterning protein tolloid (tld) from Drosophila melanogaster (Fruit fly).